Consider the following 660-residue polypeptide: Bifunctional polymyxin resistance protein ArnA (660 aa).

The tract at residues 1–304 (MKTVVFAYHD…TLGLVQGSRL (304 aa)) is formyltransferase ArnAFT. (6R)-10-formyltetrahydrofolate is bound at residue 86-88 (HLI). The active-site Proton donor; for formyltransferase activity is the H104. Residues R114 and 136-140 (VKRAD) each bind (6R)-10-formyltetrahydrofolate. Positions 314-660 (RRTRVLILGV…RTVDLTDKPS (347 aa)) are dehydrogenase ArnADH. NAD(+) contacts are provided by residues D347 and 368–369 (DI). Residues A393, Y398, and 432-433 (TS) each bind UDP-alpha-D-glucuronate. Catalysis depends on E434, which acts as the Proton acceptor; for decarboxylase activity. Residues R460, N492, 526–535 (KLIDGGKQKR), and Y613 each bind UDP-alpha-D-glucuronate. R619 acts as the Proton donor; for decarboxylase activity in catalysis.

This sequence in the N-terminal section; belongs to the Fmt family. UDP-L-Ara4N formyltransferase subfamily. It in the C-terminal section; belongs to the NAD(P)-dependent epimerase/dehydratase family. UDP-glucuronic acid decarboxylase subfamily. As to quaternary structure, homohexamer, formed by a dimer of trimers.

The catalysed reaction is UDP-alpha-D-glucuronate + NAD(+) = UDP-beta-L-threo-pentopyranos-4-ulose + CO2 + NADH. It carries out the reaction UDP-4-amino-4-deoxy-beta-L-arabinose + (6R)-10-formyltetrahydrofolate = UDP-4-deoxy-4-formamido-beta-L-arabinose + (6S)-5,6,7,8-tetrahydrofolate + H(+). It functions in the pathway nucleotide-sugar biosynthesis; UDP-4-deoxy-4-formamido-beta-L-arabinose biosynthesis; UDP-4-deoxy-4-formamido-beta-L-arabinose from UDP-alpha-D-glucuronate: step 1/3. Its pathway is nucleotide-sugar biosynthesis; UDP-4-deoxy-4-formamido-beta-L-arabinose biosynthesis; UDP-4-deoxy-4-formamido-beta-L-arabinose from UDP-alpha-D-glucuronate: step 3/3. It participates in bacterial outer membrane biogenesis; lipopolysaccharide biosynthesis. In terms of biological role, bifunctional enzyme that catalyzes the oxidative decarboxylation of UDP-glucuronic acid (UDP-GlcUA) to UDP-4-keto-arabinose (UDP-Ara4O) and the addition of a formyl group to UDP-4-amino-4-deoxy-L-arabinose (UDP-L-Ara4N) to form UDP-L-4-formamido-arabinose (UDP-L-Ara4FN). The modified arabinose is attached to lipid A and is required for resistance to polymyxin and cationic antimicrobial peptides. In Escherichia coli O17:K52:H18 (strain UMN026 / ExPEC), this protein is Bifunctional polymyxin resistance protein ArnA.